The primary structure comprises 241 residues: Uridylate kinase (241 aa).

12–15 (KVSG) serves as a coordination point for ATP. An involved in allosteric activation by GTP region spans residues 20 to 25 (GEKGTG). Gly54 lines the UMP pocket. Residues Gly55 and Arg59 each contribute to the ATP site. UMP is bound by residues Asp74 and 135–142 (TGNPYFST). ATP-binding residues include Asn163, Tyr169, and Asp172.

This sequence belongs to the UMP kinase family. Homohexamer.

It localises to the cytoplasm. It catalyses the reaction UMP + ATP = UDP + ADP. It participates in pyrimidine metabolism; CTP biosynthesis via de novo pathway; UDP from UMP (UMPK route): step 1/1. Its activity is regulated as follows. Allosterically activated by GTP. Inhibited by UTP. Catalyzes the reversible phosphorylation of UMP to UDP. This Lactobacillus johnsonii (strain CNCM I-12250 / La1 / NCC 533) protein is Uridylate kinase.